The primary structure comprises 72 residues: Gas vesicle protein A (72 aa).

This sequence belongs to the gas vesicle GvpA family. In terms of assembly, the gas vesicle shell is 2 nm thick and consists of a single layer of this protein. It forms helical ribs nearly perpendicular to the long axis of the vesicle.

Its subcellular location is the gas vesicle shell. In terms of biological role, gas vesicles are hollow, gas filled proteinaceous nanostructures found in some microorganisms. During planktonic growth they allow positioning of the organism at a favorable depth for light or nutrient acquisition. GvpA forms the protein shell. The sequence is that of Gas vesicle protein A from Geotalea uraniireducens (strain Rf4) (Geobacter uraniireducens).